Here is a 293-residue protein sequence, read N- to C-terminus: 4-hydroxy-tetrahydrodipicolinate synthase (293 aa).

Threonine 44 is a binding site for pyruvate. The active-site Proton donor/acceptor is tyrosine 132. The active-site Schiff-base intermediate with substrate is lysine 161. Isoleucine 203 contacts pyruvate.

Belongs to the DapA family. In terms of assembly, homotetramer; dimer of dimers.

Its subcellular location is the cytoplasm. The enzyme catalyses L-aspartate 4-semialdehyde + pyruvate = (2S,4S)-4-hydroxy-2,3,4,5-tetrahydrodipicolinate + H2O + H(+). It participates in amino-acid biosynthesis; L-lysine biosynthesis via DAP pathway; (S)-tetrahydrodipicolinate from L-aspartate: step 3/4. Functionally, catalyzes the condensation of (S)-aspartate-beta-semialdehyde [(S)-ASA] and pyruvate to 4-hydroxy-tetrahydrodipicolinate (HTPA). In Sulfurihydrogenibium sp. (strain YO3AOP1), this protein is 4-hydroxy-tetrahydrodipicolinate synthase.